A 479-amino-acid chain; its full sequence is MAWNTNLRWRLPLTCLLLQVIMVILFGVFVRYDFEADAHWWSERTHKNLSDMENEFYYRYPSFQDVHVMVFVGFGFLMTFLQRYGFSAVGFNFLLAAFGIQWALLMQGWFHFLQDRYIVVGVENLINADFCVASVCVAFGAVLGKVSPIQLLIMTFFQVTLFAVNEFILLNLLKVKDAGGSMTIHTFGAYFGLTVTRILYRRNLEQSKERQNSVYQSDLFAMIGTLFLWMYWPSFNSAISYHGDSQHRAAINTYCSLAACVLTSVAISSALHKKGKLDMVHIQNATLAGGVAVGTAAEMMLMPYGALIIGFVCGIISTLGFVYLTPFLESRLHIQDTCGINNLHGIPGIIGGIVGAVTAASASLEVYGKEGLVHSFDFQGFNGDWTARTQGKFQIYGLLVTLAMALMGGIIVGLILRLPFWGQPSDENCFEDAVYWEMPEGNSTVYIPEDPTFKPSGPSVPSVPMVSPLPMASSVPLVP.

Residues 1-9 (MAWNTNLRW) lie on the Cytoplasmic side of the membrane. The helical transmembrane segment at 10–30 (RLPLTCLLLQVIMVILFGVFV) threads the bilayer. Over 31–60 (RYDFEADAHWWSERTHKNLSDMENEFYYRY) the chain is Extracellular. Asn48 carries N-linked (GlcNAc...) asparagine glycosylation. The helical transmembrane segment at 61 to 81 (PSFQDVHVMVFVGFGFLMTFL) threads the bilayer. At 82-85 (QRYG) the chain is on the cytoplasmic side. Residues 86–106 (FSAVGFNFLLAAFGIQWALLM) traverse the membrane as a helical segment. Over 107–123 (QGWFHFLQDRYIVVGVE) the chain is Extracellular. The chain crosses the membrane as a helical span at residues 124 to 144 (NLINADFCVASVCVAFGAVLG). Over 145-148 (KVSP) the chain is Cytoplasmic. The chain crosses the membrane as a helical span at residues 149-169 (IQLLIMTFFQVTLFAVNEFIL). At 170 to 177 (LNLLKVKD) the chain is on the extracellular side. Residues 178–200 (AGGSMTIHTFGAYFGLTVTRILY) form a helical membrane-spanning segment. Topologically, residues 201-218 (RRNLEQSKERQNSVYQSD) are cytoplasmic. A helical transmembrane segment spans residues 219 to 239 (LFAMIGTLFLWMYWPSFNSAI). The Extracellular portion of the chain corresponds to 240–250 (SYHGDSQHRAA). Residues 251–271 (INTYCSLAACVLTSVAISSAL) traverse the membrane as a helical segment. Over 272-281 (HKKGKLDMVH) the chain is Cytoplasmic. The helical transmembrane segment at 282-302 (IQNATLAGGVAVGTAAEMMLM) threads the bilayer. Pro303 is a topological domain (extracellular). The helical transmembrane segment at 304-324 (YGALIIGFVCGIISTLGFVYL) threads the bilayer. At 325–345 (TPFLESRLHIQDTCGINNLHG) the chain is on the cytoplasmic side. A helical membrane pass occupies residues 346 to 366 (IPGIIGGIVGAVTAASASLEV). The Extracellular segment spans residues 367–394 (YGKEGLVHSFDFQGFNGDWTARTQGKFQ). The helical transmembrane segment at 395-415 (IYGLLVTLAMALMGGIIVGLI) threads the bilayer. Topologically, residues 416-479 (LRLPFWGQPS…PMASSVPLVP (64 aa)) are cytoplasmic.

It belongs to the ammonium transporter (TC 2.A.49) family. Rh subfamily. Homotrimer. In terms of processing, N-glycosylated. In terms of tissue distribution, expressed in brain, testis, placenta, pancreas, esophagus and prostate. Expressed in squamous epithelial tissues (at protein level). Expressed in kidney.

It localises to the cell membrane. The protein localises to the apical cell membrane. The enzyme catalyses NH4(+)(in) = NH4(+)(out). The catalysed reaction is methylamine(out) = methylamine(in). It catalyses the reaction CO2(out) = CO2(in). Its function is as follows. Ammonium transporter involved in the maintenance of acid-base homeostasis. Transports ammonium and its related derivative methylammonium across the plasma membrane of epithelial cells likely contributing to renal transepithelial ammonia transport and ammonia metabolism. Postulated to primarily mediate an electroneutral bidirectional transport of NH3 ammonia species according to a mechanism that implies interaction of an NH4(+) ion with acidic residues of the pore entry followed by dissociation of NH4(+) into NH3 and H(+). As a result NH3 transits through the central pore and is protonated on the extracellular side reforming NH4(+). May act as a CO2 channel providing for renal acid secretion. This is Ammonium transporter Rh type C (RHCG) from Homo sapiens (Human).